We begin with the raw amino-acid sequence, 424 residues long: Enolase (424 aa).

Glutamine 162 provides a ligand contact to (2R)-2-phosphoglycerate. The Proton donor role is filled by glutamate 204. Mg(2+)-binding residues include aspartate 241, glutamate 284, and aspartate 311. Positions 336, 365, 366, and 387 each coordinate (2R)-2-phosphoglycerate. Lysine 336 acts as the Proton acceptor in catalysis.

This sequence belongs to the enolase family. The cofactor is Mg(2+).

It localises to the cytoplasm. The protein localises to the secreted. Its subcellular location is the cell surface. The enzyme catalyses (2R)-2-phosphoglycerate = phosphoenolpyruvate + H2O. It participates in carbohydrate degradation; glycolysis; pyruvate from D-glyceraldehyde 3-phosphate: step 4/5. Functionally, catalyzes the reversible conversion of 2-phosphoglycerate (2-PG) into phosphoenolpyruvate (PEP). It is essential for the degradation of carbohydrates via glycolysis. This Rhizobium etli (strain ATCC 51251 / DSM 11541 / JCM 21823 / NBRC 15573 / CFN 42) protein is Enolase.